Here is a 157-residue protein sequence, read N- to C-terminus: Small ribosomal subunit protein uS7 (157 aa).

Belongs to the universal ribosomal protein uS7 family. As to quaternary structure, part of the 30S ribosomal subunit. Contacts proteins S9 and S11.

Its function is as follows. One of the primary rRNA binding proteins, it binds directly to 16S rRNA where it nucleates assembly of the head domain of the 30S subunit. Is located at the subunit interface close to the decoding center, probably blocks exit of the E-site tRNA. In Albidiferax ferrireducens (strain ATCC BAA-621 / DSM 15236 / T118) (Rhodoferax ferrireducens), this protein is Small ribosomal subunit protein uS7.